We begin with the raw amino-acid sequence, 178 residues long: Large ribosomal subunit protein uL6 (178 aa).

This sequence belongs to the universal ribosomal protein uL6 family. In terms of assembly, part of the 50S ribosomal subunit.

Its function is as follows. This protein binds to the 23S rRNA, and is important in its secondary structure. It is located near the subunit interface in the base of the L7/L12 stalk, and near the tRNA binding site of the peptidyltransferase center. This is Large ribosomal subunit protein uL6 from Francisella tularensis subsp. holarctica (strain FTNF002-00 / FTA).